Reading from the N-terminus, the 273-residue chain is Aspartate/glutamate leucyltransferase (273 aa).

It belongs to the R-transferase family. Bpt subfamily.

The protein resides in the cytoplasm. It catalyses the reaction N-terminal L-glutamyl-[protein] + L-leucyl-tRNA(Leu) = N-terminal L-leucyl-L-glutamyl-[protein] + tRNA(Leu) + H(+). It carries out the reaction N-terminal L-aspartyl-[protein] + L-leucyl-tRNA(Leu) = N-terminal L-leucyl-L-aspartyl-[protein] + tRNA(Leu) + H(+). In terms of biological role, functions in the N-end rule pathway of protein degradation where it conjugates Leu from its aminoacyl-tRNA to the N-termini of proteins containing an N-terminal aspartate or glutamate. The protein is Aspartate/glutamate leucyltransferase of Ruegeria pomeroyi (strain ATCC 700808 / DSM 15171 / DSS-3) (Silicibacter pomeroyi).